Here is a 463-residue protein sequence, read N- to C-terminus: Kynureninase 2 (463 aa).

Pyridoxal 5'-phosphate is bound by residues leucine 134, threonine 135, phenylalanine 162–aspartate 165, aspartate 247, histidine 250, and tyrosine 272. The residue at position 273 (lysine 273) is an N6-(pyridoxal phosphate)lysine. Positions 312 and 340 each coordinate pyridoxal 5'-phosphate.

The protein belongs to the kynureninase family. In terms of assembly, homodimer. The cofactor is pyridoxal 5'-phosphate.

Its subcellular location is the cytoplasm. The enzyme catalyses L-kynurenine + H2O = anthranilate + L-alanine + H(+). It catalyses the reaction 3-hydroxy-L-kynurenine + H2O = 3-hydroxyanthranilate + L-alanine + H(+). It participates in amino-acid degradation; L-kynurenine degradation; L-alanine and anthranilate from L-kynurenine: step 1/1. The protein operates within cofactor biosynthesis; NAD(+) biosynthesis; quinolinate from L-kynurenine: step 2/3. Its function is as follows. Catalyzes the cleavage of L-kynurenine (L-Kyn) and L-3-hydroxykynurenine (L-3OHKyn) into anthranilic acid (AA) and 3-hydroxyanthranilic acid (3-OHAA), respectively. The polypeptide is Kynureninase 2 (bna5-2) (Aspergillus niger (strain ATCC MYA-4892 / CBS 513.88 / FGSC A1513)).